The primary structure comprises 135 residues: 2-iminobutanoate/2-iminopropanoate deaminase (135 aa).

Position 2 is an N-acetylserine (S2). An N6-succinyllysine mark is found at K13, K60, K67, and K134.

This sequence belongs to the RutC family. In terms of assembly, homotrimer. Interacts with YTHDF2. As to expression, expressed predominantly in liver and kidney. Lower levels in lung and brain.

It is found in the cytoplasm. It localises to the nucleus. The protein localises to the peroxisome. Its subcellular location is the mitochondrion. It carries out the reaction 2-iminobutanoate + H2O = 2-oxobutanoate + NH4(+). The catalysed reaction is 2-iminopropanoate + H2O = pyruvate + NH4(+). Its function is as follows. Catalyzes the hydrolytic deamination of enamine/imine intermediates that form during the course of normal metabolism. May facilitate the release of ammonia from these potentially toxic reactive metabolites, reducing their impact on cellular components. It may act on enamine/imine intermediates formed by several types of pyridoxal-5'-phosphate-dependent dehydratases including L-threonine dehydratase. Also promotes endoribonucleolytic cleavage of some transcripts by promoting recruitment of the ribonuclease P/MRP complex. Acts by bridging YTHDF2 and the ribonuclease P/MRP complex. RIDA/HRSP12 binds to N6-methyladenosine (m6A)-containing mRNAs containing a 5'-GGUUC-3' motif: cooperative binding of RIDA/HRSP12 and YTHDF2 to such transcripts lead to recruitment of the ribonuclease P/MRP complex and subsequent endoribonucleolytic cleavage. The chain is 2-iminobutanoate/2-iminopropanoate deaminase from Mus musculus (Mouse).